A 336-amino-acid chain; its full sequence is Syntaxin-31 (336 aa).

The Cytoplasmic segment spans residues 1–314 (MGSTFRDRTV…QHLTRISSNR (314 aa)). 2 disordered regions span residues 23-53 (GAIP…KASR) and 152-218 (RSEN…SQLR). Over residues 154 to 163 (ENMKAHENRK) the composition is skewed to basic and acidic residues. Residues 164-181 (QLFSTKNAVDSPPQNNAK) are compositionally biased toward polar residues. Residues 190-202 (SSSSNPFGNLQQP) are compositionally biased toward low complexity. Positions 244–306 (ENYSQSRAVA…EGARSALLQH (63 aa)) constitute a t-SNARE coiled-coil homology domain. A helical; Anchor for type IV membrane protein membrane pass occupies residues 315–335 (WLMMKIFAVIILFLIVFLFFV). Residue Ala336 is a topological domain, vesicular.

This sequence belongs to the syntaxin family. In terms of assembly, part of the t-SNARE complex. Interacts with CDC48A, but not with VPS45.

The protein localises to the golgi apparatus. It localises to the cis-Golgi network membrane. The protein resides in the cytoplasm. Its subcellular location is the endosome. Its function is as follows. Vesicle trafficking protein that functions in the secretory pathway. The sequence is that of Syntaxin-31 (SYP31) from Arabidopsis thaliana (Mouse-ear cress).